A 1000-amino-acid chain; its full sequence is MVIASLESTHAISTSIVLSSDLWTEFYGTESVSSASPNYVKLTLPSYNKWHHQALISHCDNDDSLPFGSAGLPTNFIKQSQVRPMFSSIEIEPYVQQLPNLDNLVLSLNPDLFNELNQLSKEEQRKFLTLRFNLLFGITVLNVNQVVYPAFCKVTSSSNDFGILTDQTQIVLVPDSNVVEQSRSNDEFTEFDHLFSLHVKIQSLLDPVPVEFLSPPQPDTTDNDLFAFVQPNILLQLGVPSGTFVRVIAEEQEMLVQLFVLFAPNEYECDSLYVSPRVRYVFMNHARVIIQRPNLALNRFSVSNAVTLSRIGCQINAQRRYQDIISHHLALYFSEKQRIVKVGDLIPITFDSNYASMFTDDIRSGQHDTLVWFKVEEIESDSNEEYHIIDSSITRLSTVKITSRELMPKSICDYDRFYNLSPLFHYDEDAFPFAKRLKDILNTAIKCSARNVNVGTSIMLHSSSPNVGKTMLTRSVCAELGFHLIHVDCLSLTSNSNTSDATNKTIGYIRAKIETIISYVEKVVIFLSHLETILEDEQNQQDNTSSKMARQMNVEMADLIEEYTTKYKGTVFVGSTNDIDNIPAIVRSRIKFEIDVPVPTEKQRLQMFRWYFDPYVLNSQTPKLRSLISHNVPLQTVSVQSAGLTPMDIRSIVKAVKYKCYQRLKQNDLLIDMTDITAVINIARDRFSDSIGAPKIPNVTWDDIGGMDVVKGEIMDTIDMPLKHPELFSSGMKKRSGILFYGPPGTGKTLLAKAIASNFSLNFFSVKGPELLNMYIGESEANVRRVFQKARDAKPCVIFFDELDSVAPKRGNQGDSGGVMDRIVSQLLAELDGMSSGGDGVFVIGATNRPDLLDEALLRPGRFDKMLYLGISDTDKKQANIIKALTRKFTLESGIDILDIAKKCPFNYTGADFYALCSDALLNAMTRVAGEVDEKWEKYNMENKKNISLRYWFDNVANENDLKVVVKLQDFELAQQNLIPSVSEDELRHYLRLKSSFESQ.

Position 742–749 (742–749 (GPPGTGKT)) interacts with ATP.

This sequence belongs to the AAA ATPase family. In terms of assembly, interacts with PEX1; forming the PEX1-PEX6 AAA ATPase complex, which is composed of a heterohexamer formed by a trimer of PEX1-PEX6 dimers.

Its subcellular location is the cytoplasm. The protein localises to the cytosol. It is found in the peroxisome membrane. It carries out the reaction ATP + H2O = ADP + phosphate + H(+). Its function is as follows. Component of the PEX1-PEX6 AAA ATPase complex, a protein dislocase complex that mediates the ATP-dependent extraction of the PEX5 receptor from peroxisomal membranes, an essential step for PEX5 recycling. Specifically recognizes PEX5 monoubiquitinated at 'Cys-6', and pulls it out of the peroxisome lumen through the PEX2-PEX10-PEX12 retrotranslocation channel. Extraction by the PEX1-PEX6 AAA ATPase complex is accompanied by unfolding of the TPR repeats and release of bound cargo from PEX5. In Kluyveromyces lactis (strain ATCC 8585 / CBS 2359 / DSM 70799 / NBRC 1267 / NRRL Y-1140 / WM37) (Yeast), this protein is Peroxisomal ATPase PEX6 (PEX6).